We begin with the raw amino-acid sequence, 699 residues long: Elongation factor G (699 aa).

The 276-residue stretch at 8-283 (EHIRNIGICA…AVVDFLPSPI (276 aa)) folds into the tr-type G domain. GTP-binding positions include 17–24 (AHIDAGKT), 81–85 (DTPGH), and 135–138 (NKMD).

This sequence belongs to the TRAFAC class translation factor GTPase superfamily. Classic translation factor GTPase family. EF-G/EF-2 subfamily.

It localises to the cytoplasm. In terms of biological role, catalyzes the GTP-dependent ribosomal translocation step during translation elongation. During this step, the ribosome changes from the pre-translocational (PRE) to the post-translocational (POST) state as the newly formed A-site-bound peptidyl-tRNA and P-site-bound deacylated tRNA move to the P and E sites, respectively. Catalyzes the coordinated movement of the two tRNA molecules, the mRNA and conformational changes in the ribosome. The protein is Elongation factor G of Rickettsia africae (strain ESF-5).